Reading from the N-terminus, the 229-residue chain is Enolase-phosphatase E1 (229 aa).

It belongs to the HAD-like hydrolase superfamily. MasA/MtnC family. Monomer. It depends on Mg(2+) as a cofactor.

It catalyses the reaction 5-methylsulfanyl-2,3-dioxopentyl phosphate + H2O = 1,2-dihydroxy-5-(methylsulfanyl)pent-1-en-3-one + phosphate. Its pathway is amino-acid biosynthesis; L-methionine biosynthesis via salvage pathway; L-methionine from S-methyl-5-thio-alpha-D-ribose 1-phosphate: step 3/6. It functions in the pathway amino-acid biosynthesis; L-methionine biosynthesis via salvage pathway; L-methionine from S-methyl-5-thio-alpha-D-ribose 1-phosphate: step 4/6. Its function is as follows. Bifunctional enzyme that catalyzes the enolization of 2,3-diketo-5-methylthiopentyl-1-phosphate (DK-MTP-1-P) into the intermediate 2-hydroxy-3-keto-5-methylthiopentenyl-1-phosphate (HK-MTPenyl-1-P), which is then dephosphorylated to form the acireductone 1,2-dihydroxy-3-keto-5-methylthiopentene (DHK-MTPene). This is Enolase-phosphatase E1 from Yersinia pseudotuberculosis serotype O:1b (strain IP 31758).